Reading from the N-terminus, the 492-residue chain is Chitooligosaccharide oxidase (492 aa).

Residues 1-19 form the signal peptide; the sequence is MHFNTLTCVLVGLVAHTSA. Residues 57–229 enclose the FAD-binding PCMH-type domain; sequence LPFEPAAIAV…VELEFQTFAA (173 aa). The 6-(S-cysteinyl)-8alpha-(pros-histidyl)-FAD (His-Cys) cross-link spans 94 to 154; sequence HSYTSLGFGG…GKRALAHGTC (61 aa).

Belongs to the oxygen-dependent FAD-linked oxidoreductase family. FAD serves as cofactor. The FAD cofactor is bound via a bicovalent 6-S-cysteinyl, 8alpha-N1-histidyl FAD linkage.

The protein localises to the secreted. The catalysed reaction is N,N'-diacetylchitobiose + O2 = N,N'-diacetylchitobiono-1,5-lactone + H2O2. It catalyses the reaction N,N',N''-triacetylchitotriose + O2 = N,N',N''-triacetylchitotriono-1,5-lactone + H2O2. It carries out the reaction N,N',N'',N'''-tetraacetylchitotetraose + O2 = N,N',N'',N'''-tetraacetylchitotetraono-1,5-lactone + H2O2. Its function is as follows. Catalyzes the selective oxidation of C1 hydroxyl moieties on chitooligosaccharides with concomitant reduction of molecular oxygen to hydrogen peroxide. This results in the formation of the corresponding lactones, which typically undergo spontaneous hydrolysis. Chitooligosaccharides are homo- or heterooligomers of N-acetylglucosamine (GlcNAc) and D-glucosamine which are linked through beta-1,4-glycosidic bonds. For optimal substrate binding at least 2 GlcNAc units are needed, and chitooligosaccharide oxidase is most efficient on chitobiose, chitotriose and chitotetraose. This is Chitooligosaccharide oxidase from Gibberella zeae (strain ATCC MYA-4620 / CBS 123657 / FGSC 9075 / NRRL 31084 / PH-1) (Wheat head blight fungus).